The chain runs to 297 residues: 4-hydroxy-tetrahydrodipicolinate synthase (297 aa).

Pyruvate is bound at residue Thr50. Tyr138 functions as the Proton donor/acceptor in the catalytic mechanism. Lys166 (schiff-base intermediate with substrate) is an active-site residue. Residue Ile208 coordinates pyruvate.

Belongs to the DapA family. Homotetramer; dimer of dimers.

The protein localises to the cytoplasm. The enzyme catalyses L-aspartate 4-semialdehyde + pyruvate = (2S,4S)-4-hydroxy-2,3,4,5-tetrahydrodipicolinate + H2O + H(+). It participates in amino-acid biosynthesis; L-lysine biosynthesis via DAP pathway; (S)-tetrahydrodipicolinate from L-aspartate: step 3/4. In terms of biological role, catalyzes the condensation of (S)-aspartate-beta-semialdehyde [(S)-ASA] and pyruvate to 4-hydroxy-tetrahydrodipicolinate (HTPA). The chain is 4-hydroxy-tetrahydrodipicolinate synthase from Gluconobacter oxydans (strain 621H) (Gluconobacter suboxydans).